A 267-amino-acid polypeptide reads, in one-letter code: Probable tetrahydroxynaphthalene reductase MYCGRDRAFT_87994 (267 aa).

NADP(+) contacts are provided by isoleucine 26, aspartate 72, asparagine 99, and arginine 132. Serine 149 (proton donor) is an active-site residue. Tyrosine 163, lysine 167, isoleucine 196, and threonine 198 together coordinate NADP(+). Residue tyrosine 163 is the Proton acceptor of the active site. Lysine 167 functions as the Lowers pKa of active site Tyr in the catalytic mechanism.

The protein belongs to the short-chain dehydrogenases/reductases (SDR) family. As to quaternary structure, homotetramer.

It carries out the reaction scytalone + NADP(+) = naphthalene-1,3,6,8-tetrol + NADPH + H(+). The protein operates within pigment biosynthesis; melanin biosynthesis. Probable tetrahydroxynaphthalene reductase; part of the gene cluster 29 that mediates the biosynthesis dihydroxynaphthalene (DHN)-melanin, a bluish-green pigment and a structural component of the conidial wall. Catalyzes the NADPH-dependent reduction of 1,3,6,8-tetrahydroxynaphthalene (T4HN) into (+)-scytalone. This is Probable tetrahydroxynaphthalene reductase MYCGRDRAFT_87994 from Zymoseptoria tritici (strain CBS 115943 / IPO323) (Speckled leaf blotch fungus).